The sequence spans 912 residues: Eukaryotic translation initiation factor 3 subunit C (912 aa).

The tract at residues 1-44 is disordered; the sequence is MSRFFTTGSDSESESSLSGEELVTKPVGGNYGKQPLLLSEDEED. Residues 8-21 show a composition bias toward low complexity; the sequence is GSDSESESSLSGEE. Ser9, Ser11, Ser13, Ser15, Ser16, Ser18, and Ser39 each carry phosphoserine. Lys99 carries the post-translational modification N6-acetyllysine. 2 disordered regions span residues 157–305 and 521–541; these read TNYK…RVRG and QLTP…NEGE. Phosphoserine occurs at positions 166, 178, 181, and 182. A compositionally biased stretch (acidic residues) spans 166–190; it reads SADEDAEKNEEDSEGSSDEDEDDDG. Over residues 199 to 215 the composition is skewed to basic and acidic residues; that stretch reads KKSEAPSGDSRKFLKKE. The segment covering 216–229 has biased composition (acidic residues); that stretch reads DEDEDSEESEDSEA. Basic and acidic residues predominate over residues 260 to 277; sequence PTTEEDKKAAEKKREDKA. Residues 521 to 530 show a composition bias toward polar residues; the sequence is QLTPPEGSSK. Thr523 bears the Phosphothreonine mark. An N6-acetyllysine modification is found at Lys642. Residues 672–848 form the PCI domain; sequence FHLHINLELL…QTVVMHRTEP (177 aa). The interval 884 to 912 is disordered; the sequence is FRDQKDGYRKNEGYMRRGGYRQQQSQTAY. Residues 885–898 are compositionally biased toward basic and acidic residues; sequence RDQKDGYRKNEGYM. Ser908 carries the post-translational modification Phosphoserine.

This sequence belongs to the eIF-3 subunit C family. As to quaternary structure, component of the eukaryotic translation initiation factor 3 (eIF-3) complex, which is composed of 13 subunits: EIF3A, EIF3B, EIF3C, EIF3D, EIF3E, EIF3F, EIF3G, EIF3H, EIF3I, EIF3J, EIF3K, EIF3L and EIF3M. The eIF-3 complex appears to include 3 stable modules: module A is composed of EIF3A, EIF3B, EIF3G and EIF3I; module B is composed of EIF3F, EIF3H, and EIF3M; and module C is composed of EIF3C, EIF3D, EIF3E, EIF3K and EIF3L. EIF3C of module C binds EIF3B of module A and EIF3H of module B, thereby linking the three modules. EIF3J is a labile subunit that binds to the eIF-3 complex via EIF3B. The eIF-3 complex interacts with RPS6KB1 under conditions of nutrient depletion. Mitogenic stimulation leads to binding and activation of a complex composed of MTOR and RPTOR, leading to phosphorylation and release of RPS6KB1 and binding of EIF4B to eIF-3. Identified in a HCV IRES-mediated translation complex, at least composed of EIF3C, IGF2BP1, RPS3 and HCV RNA-replicon. Interacts with ALKBH4, IFIT1 and IFIT2. Interacts with BZW2/5MP1. Phosphorylated. Phosphorylation is enhanced upon serum stimulation.

The protein resides in the cytoplasm. In terms of biological role, component of the eukaryotic translation initiation factor 3 (eIF-3) complex, which is required for several steps in the initiation of protein synthesis. The eIF-3 complex associates with the 40S ribosome and facilitates the recruitment of eIF-1, eIF-1A, eIF-2:GTP:methionyl-tRNAi and eIF-5 to form the 43S pre-initiation complex (43S PIC). The eIF-3 complex stimulates mRNA recruitment to the 43S PIC and scanning of the mRNA for AUG recognition. The eIF-3 complex is also required for disassembly and recycling of post-termination ribosomal complexes and subsequently prevents premature joining of the 40S and 60S ribosomal subunits prior to initiation. The eIF-3 complex specifically targets and initiates translation of a subset of mRNAs involved in cell proliferation, including cell cycling, differentiation and apoptosis, and uses different modes of RNA stem-loop binding to exert either translational activation or repression. This is Eukaryotic translation initiation factor 3 subunit C from Bos taurus (Bovine).